The chain runs to 597 residues: MTENYGSMEHRKKSFRNNENLEQQFHPLREELDNAGPINDRTSELSLEGVSKAEAIASTWSKRSIIVAYLGLYLLSFASSLEQQTTYSLQRYATSNFSAHSNLATINLVGNILLAVVRAPMVKAADVFGRSESLSLALGMTVLGYLSLAFSRNIQMFTVAYILYICGQTGLGLLSQLIIADTSSLLNRGILSAIPELPYLATVWIGPVLAQAFHPEKNYGWRLGYGIWAFILPTVSLPLLASLFLNQRKAKAAGLYREHHNLINHSTPEKLRLFYLFWQELDGLGIVLFVSGFTLLLLPFSHSSQVVSPDSTILTLFTITLSIALLVTLCFYDVKYARYPVFALKSLKDRTILGSCVLIFTYFMSYYIFSNFLTSFLQVSYGLSIDMSSLTLNVFVFSMTTTAILSGFLMKRFGRFKMLLMISVPMYVLGILGIILFGINDNHYTRPLVLVLILAGMGGGLLTLSAQIAVQSVSSHAKLGMNLTLYLTFSSVGGAFGSAIAGGVWSKRLSSRLLHDLKDHLPVPEIESIFRDLRTALSYPQGTQIRNIINVAYTATEKDLFHISLVASLFMFAGLVIIRDVPLSTENHDTAVETPSE.

Ser46 is modified (phosphoserine). The next 14 helical transmembrane spans lie at 65–85 (IIVAYLGLYLLSFASSLEQQT), 97–117 (FSAHSNLATINLVGNILLAVV), 131–151 (SESLSLALGMTVLGYLSLAFS), 159–179 (VAYILYICGQTGLGLLSQLII), 190–210 (ILSAIPELPYLATVWIGPVLA), 225–245 (YGIWAFILPTVSLPLLASLFL), 281–301 (LDGLGIVLFVSGFTLLLLPFS), 312–332 (TILTLFTITLSIALLVTLCFY), 357–377 (VLIFTYFMSYYIFSNFLTSFL), 390–410 (LTLNVFVFSMTTTAILSGFLM), 419–439 (LLMISVPMYVLGILGIILFGI), 448–468 (LVLVLILAGMGGGLLTLSAQI), 485–505 (LYLTFSSVGGAFGSAIAGGVW), and 558–578 (KDLFHISLVASLFMFAGLVII).

Belongs to the major facilitator superfamily.

The protein resides in the membrane. Involved in the transport of siderophore iron and so has a role in iron homeostasis. This is Siderophore iron transporter 2 (str2) from Schizosaccharomyces pombe (strain 972 / ATCC 24843) (Fission yeast).